A 251-amino-acid polypeptide reads, in one-letter code: Cathelicidin-B1 (251 aa).

The first 20 residues, 1–20, serve as a signal peptide directing secretion; the sequence is MGRMWASEVLLLLLLGSSRA. Positions 21–211 are excised as a propeptide; the sequence is VTPGLDVSTA…ELRCRPLRPQ (191 aa). Residues 29 to 109 are disordered; the sequence is TAPGLDGSIP…TITPKQDGSI (81 aa). Cystine bridges form between Cys172-Cys181 and Cys189-Cys205.

This sequence belongs to the cathelicidin family. Detected in bursa of Fabricius, in filamentous structures surrounding the basal and lateral surfaces of bursal M cells (at protein level). Detected in bursa of Fabricius, in secretory enterocytes of the interfollicular bursal epithelium, but not in M cells.

The protein resides in the secreted. Its function is as follows. Has potent antimicrobial activity against Gram-positive and Gram-negative bacteria (in vitro). May play a role in the innate immune response. The polypeptide is Cathelicidin-B1 (CATHB1) (Gallus gallus (Chicken)).